A 170-amino-acid polypeptide reads, in one-letter code: Cytochrome b6-f complex subunit 4 (170 aa).

The next 3 membrane-spanning stretches (helical) occupy residues 36–56, 95–115, and 131–151; these read LLYIFPVVILGTIACNVGLAV, LLGVLLMVSVPAGLLTVPFLE, and TVFLIGTAVALWLGIGATLPI.

It belongs to the cytochrome b family. PetD subfamily. In terms of assembly, the 4 large subunits of the cytochrome b6-f complex are cytochrome b6, subunit IV (17 kDa polypeptide, petD), cytochrome f and the Rieske protein, while the 4 small subunits are petG, petL, petM and petN. The complex functions as a dimer.

The protein resides in the plastid. Its subcellular location is the chloroplast thylakoid membrane. Component of the cytochrome b6-f complex, which mediates electron transfer between photosystem II (PSII) and photosystem I (PSI), cyclic electron flow around PSI, and state transitions. The polypeptide is Cytochrome b6-f complex subunit 4 (Nymphaea alba (White water-lily)).